The sequence spans 127 residues: Small ribosomal subunit protein uS12 (127 aa).

Asp-89 bears the 3-methylthioaspartic acid mark.

It belongs to the universal ribosomal protein uS12 family. As to quaternary structure, part of the 30S ribosomal subunit. Contacts proteins S8 and S17. May interact with IF1 in the 30S initiation complex.

With S4 and S5 plays an important role in translational accuracy. In terms of biological role, interacts with and stabilizes bases of the 16S rRNA that are involved in tRNA selection in the A site and with the mRNA backbone. Located at the interface of the 30S and 50S subunits, it traverses the body of the 30S subunit contacting proteins on the other side and probably holding the rRNA structure together. The combined cluster of proteins S8, S12 and S17 appears to hold together the shoulder and platform of the 30S subunit. The sequence is that of Small ribosomal subunit protein uS12 from Akkermansia muciniphila (strain ATCC BAA-835 / DSM 22959 / JCM 33894 / BCRC 81048 / CCUG 64013 / CIP 107961 / Muc).